The sequence spans 761 residues: Ribonucleoside-diphosphate reductase 1 subunit alpha (761 aa).

Residues 5–95 (LLVTKRDGST…IFHLRKKAYG (91 aa)) enclose the ATP-cone domain. ATP is bound by residues Lys9, 15–21 (ERINLDK), Thr55, and Lys91. Thr209 contacts GDP. Cys225 and Cys462 are joined by a disulfide. DTTP is bound by residues 232-234 (DSL), Arg262, and Arg269. Lys283 carries the post-translational modification N6-acetyllysine. Asn437 contacts GDP. Catalysis depends on Asn437, which acts as the Proton acceptor. The Cysteine radical intermediate role is filled by Cys439. Residues Glu441 and 623–625 (ETS) contribute to the GDP site. The active-site Proton acceptor is Glu441.

This sequence belongs to the ribonucleoside diphosphate reductase large chain family. In terms of assembly, tetramer of two alpha (R1) and two beta (R2) subunits. The B1 protein is a dimer of alpha subunits. A radical transfer pathway occurs between 'Tyr-122' of R2 and R1. Binding of the substrate occurs primarily when the active-site cysteines are reduced.

It catalyses the reaction a 2'-deoxyribonucleoside 5'-diphosphate + [thioredoxin]-disulfide + H2O = a ribonucleoside 5'-diphosphate + [thioredoxin]-dithiol. Under complex allosteric control mediated by deoxynucleoside triphosphates and ATP binding to separate specificity and activation sites on the alpha subunit. The type of nucleotide bound at the specificity site determines substrate preference. It seems probable that ATP makes the enzyme reduce CDP and UDP, dGTP favors ADP reduction and dTTP favors GDP reduction. Stimulated by ATP and inhibited by dATP binding to the activity site. In vitro, its activity is increased by dithiothreitol (DTT) or thioredoxins (non-specific). Inhibited by hydroxyurea, leads to dNTP depletion, replication fork arrest and genomic instability. Functionally, provides the precursors necessary for DNA synthesis. Catalyzes the biosynthesis of deoxyribonucleotides from the corresponding ribonucleotides. R1 contains the binding sites for both substrates and allosteric effectors and carries out the actual reduction of the ribonucleotide. It also provides redox-active cysteines. This is Ribonucleoside-diphosphate reductase 1 subunit alpha (nrdA) from Escherichia coli (strain K12).